We begin with the raw amino-acid sequence, 108 residues long: Parvalbumin beta 2 (108 aa).

An N-acetylserine modification is found at S2. EF-hand domains lie at 38–73 (KSSDDVKKAFYVIDQDKSGFIEEDELKLFLQNFSAS) and 77–108 (LTDAETKAFLADGDKDGDGMIGVDEFAAMIKG). Ca(2+) contacts are provided by D51, D53, S55, F57, E59, E62, D90, D92, D94, M96, and E101.

The protein belongs to the parvalbumin family.

In terms of biological role, in muscle, parvalbumin is thought to be involved in relaxation after contraction. It binds two calcium ions. The sequence is that of Parvalbumin beta 2 from Salmo salar (Atlantic salmon).